A 286-amino-acid chain; its full sequence is Aquaporin PIP1-1 (286 aa).

A disordered region spans residues 1–34 (MEGKEEDVRLGANKFSERQPIGTAAQSDKGYKEP). Residues 1–54 (MEGKEEDVRLGANKFSERQPIGTAAQSDKGYKEPPPAPLFEPGELTSWSFYRAG) lie on the Cytoplasmic side of the membrane. Residues 55–75 (IAEFMATFLFLYITILTVMGV) traverse the membrane as a helical segment. The Extracellular segment spans residues 76-88 (VKSNSKCSTVGIQ). The chain crosses the membrane as a helical span at residues 89-109 (GIAWAFGGMIFALVYCTAGIS). The Cytoplasmic segment spans residues 110 to 131 (GGHINPAVTFGLFLARKLSLTR). The short motif at 114-116 (NPA) is the NPA 1 element. Residues 132-152 (ALFYMVMQCLGAICGAGVVKG) traverse the membrane as a helical segment. At 153–174 (YQKGLYESNGGGANVVAPGYTK) the chain is on the extracellular side. Residues 175 to 195 (GDGLGAEIVGTFILVYTVFSA) form a helical membrane-spanning segment. Residues 196 to 208 (TDAKRNARDSHVP) are Cytoplasmic-facing. A helical transmembrane segment spans residues 209–229 (ILAPLPIGFAVFLVHLATIPI). The Extracellular segment spans residues 230 to 256 (TGTGINPARSLGAAIIYNKKHAWDDHW). Residues 235–237 (NPA) carry the NPA 2 motif. Residues 257-277 (IFWVGPFIGAALAAIYHQIVI) form a helical membrane-spanning segment. Residues 278-286 (RAIPFKSRP) are Cytoplasmic-facing.

The protein belongs to the MIP/aquaporin (TC 1.A.8) family. PIP (TC 1.A.8.11) subfamily. In terms of tissue distribution, expressed in leaves, roots, stems, flowers and fruits, with highest levels in roots.

Its subcellular location is the cell membrane. Its function is as follows. Water channel required to facilitate the transport of water across cell membrane; mercury-insensitive. Promotes primary root elongation and root hair formation. Contributes to the tolerance to multiple abiotic stresses including salt (NaCl), cold and water deprivation, by modulating cytosolic K(+)/Na(+) ratio, maintaining osmotic balance, and reducing membrane injury (e.g. oxidative injury). Also regulates the expression of abscisic acid (ABA)-responsive genes during dehydration and salt stresses. This chain is Aquaporin PIP1-1, found in Musa acuminata (Banana).